The primary structure comprises 182 residues: UPF0690 protein C1orf52 (182 aa).

2 disordered regions span residues 1–67 (MAAE…RSVT) and 100–182 (WKSN…KKKK). Residues 23 to 32 (SDEEDNIEPE) show a composition bias toward acidic residues. Residues 50-63 (NKAEKRLPGPDELF) show a composition bias toward basic and acidic residues. Threonine 67 carries the phosphothreonine modification. A Phosphotyrosine modification is found at tyrosine 132. Over residues 151–162 (EGEETLESDDEK) the composition is skewed to acidic residues. Residue serine 158 is modified to Phosphoserine. The segment covering 172–182 (VEPGEPAKKKK) has biased composition (basic and acidic residues).

Belongs to the UPF0690 family. In terms of tissue distribution, expressed in all tissues tested including heart, placenta, liver, skeletal muscle, kidney and pancreas. Weak expression in brain and lung.

The chain is UPF0690 protein C1orf52 (C1orf52) from Homo sapiens (Human).